A 432-amino-acid chain; its full sequence is Glutamyl-tRNA reductase (432 aa).

Residues 49–52 (TCNR), Ser101, 106–108 (ESQ), and Gln112 each bind substrate. The active-site Nucleophile is Cys50. 181 to 186 (GTGETI) contacts NADP(+). The disordered stretch occupies residues 410-432 (KPGYHHPTLQTTIVKTDETDPAS).

It belongs to the glutamyl-tRNA reductase family. In terms of assembly, homodimer.

The enzyme catalyses (S)-4-amino-5-oxopentanoate + tRNA(Glu) + NADP(+) = L-glutamyl-tRNA(Glu) + NADPH + H(+). Its pathway is porphyrin-containing compound metabolism; protoporphyrin-IX biosynthesis; 5-aminolevulinate from L-glutamyl-tRNA(Glu): step 1/2. In terms of biological role, catalyzes the NADPH-dependent reduction of glutamyl-tRNA(Glu) to glutamate 1-semialdehyde (GSA). This chain is Glutamyl-tRNA reductase, found in Xylella fastidiosa (strain 9a5c).